Here is a 449-residue protein sequence, read N- to C-terminus: Glucose-6-phosphate isomerase (449 aa).

Residue Glu291 is the Proton donor of the active site. Catalysis depends on residues His312 and Lys426.

The protein belongs to the GPI family.

It localises to the cytoplasm. It carries out the reaction alpha-D-glucose 6-phosphate = beta-D-fructose 6-phosphate. Its pathway is carbohydrate biosynthesis; gluconeogenesis. It functions in the pathway carbohydrate degradation; glycolysis; D-glyceraldehyde 3-phosphate and glycerone phosphate from D-glucose: step 2/4. Its function is as follows. Catalyzes the reversible isomerization of glucose-6-phosphate to fructose-6-phosphate. In Streptococcus pyogenes serotype M2 (strain MGAS10270), this protein is Glucose-6-phosphate isomerase.